We begin with the raw amino-acid sequence, 676 residues long: DNA-directed RNA polymerase subunit beta' (676 aa).

4 residues coordinate Zn(2+): C69, C71, C87, and C90. The Mg(2+) site is built by D489, D491, and D493.

Belongs to the RNA polymerase beta' chain family. RpoC1 subfamily. In terms of assembly, in plastids the minimal PEP RNA polymerase catalytic core is composed of four subunits: alpha, beta, beta', and beta''. When a (nuclear-encoded) sigma factor is associated with the core the holoenzyme is formed, which can initiate transcription. Mg(2+) is required as a cofactor. Requires Zn(2+) as cofactor.

Its subcellular location is the plastid. It localises to the chloroplast. It carries out the reaction RNA(n) + a ribonucleoside 5'-triphosphate = RNA(n+1) + diphosphate. Its function is as follows. DNA-dependent RNA polymerase catalyzes the transcription of DNA into RNA using the four ribonucleoside triphosphates as substrates. This is DNA-directed RNA polymerase subunit beta' from Lolium perenne (Perennial ryegrass).